Consider the following 335-residue polypeptide: Phosphate acyltransferase (335 aa).

This sequence belongs to the PlsX family. Homodimer. Probably interacts with PlsY.

The protein localises to the cytoplasm. The enzyme catalyses a fatty acyl-[ACP] + phosphate = an acyl phosphate + holo-[ACP]. Its pathway is lipid metabolism; phospholipid metabolism. In terms of biological role, catalyzes the reversible formation of acyl-phosphate (acyl-PO(4)) from acyl-[acyl-carrier-protein] (acyl-ACP). This enzyme utilizes acyl-ACP as fatty acyl donor, but not acyl-CoA. The polypeptide is Phosphate acyltransferase (Streptococcus equi subsp. zooepidemicus (strain H70)).